Reading from the N-terminus, the 371-residue chain is Neuropeptide S receptor (371 aa).

Residues 1–21 (MPANFTEGSFDSSGTGQTLDS) are compositionally biased toward polar residues. Residues 1–22 (MPANFTEGSFDSSGTGQTLDSS) form a disordered region. Topologically, residues 1-52 (MPANFTEGSFDSSGTGQTLDSSPVACTETVTFTEVVEGKEWGSFYYSFKTEQ) are extracellular. N-linked (GlcNAc...) asparagine glycosylation is present at N4. The helical transmembrane segment at 53–73 (LITLWVLFVFTIVGNSVVLFS) threads the bilayer. Residues 74-82 (TWRRKKKSR) are Cytoplasmic-facing. A helical membrane pass occupies residues 83–103 (MTFFVTQLAITDSFTGLVNIL). Residues 104 to 123 (TDINWRFTGDFTAPDLVCRV) are Extracellular-facing. A disulfide bridge connects residues C121 and C197. The helical transmembrane segment at 124 to 144 (VRYLQVVLLYASTYVLVSLSI) threads the bilayer. Topologically, residues 145–164 (DRYHAIVYPMKFLQGEKQAR) are cytoplasmic. A helical membrane pass occupies residues 165–185 (VLIVIAWSLSFLFSIPTLIIF). Over 186-212 (GKRTLSNGEVQCWALWPDDSYWTPYMT) the chain is Extracellular. The helical transmembrane segment at 213 to 233 (IVAFLVYFIPLTIISIMYGIV) threads the bilayer. Over 234 to 275 (IRTIWIKSKTYETVISNCSDGKLCSSYNRGLISKAKIKAIKY) the chain is Cytoplasmic. A helical transmembrane segment spans residues 276–296 (SIIIILAFICCWSPYFLFDIL). The Extracellular portion of the chain corresponds to 297–312 (DNFNLLPDTQERFYAS). Residues 313-333 (VIIQNLPALNSAINPLIYCVF) traverse the membrane as a helical segment. The Cytoplasmic segment spans residues 334–371 (SSSISFPCREQRSQDSRMTFRERTERHEMQILSKPEFI).

It belongs to the G-protein coupled receptor 1 family. Vasopressin/oxytocin receptor subfamily. As to expression, isoform 4 is ubiquitous; it is detected in glandular epithelia of bronchus, stomach, small intestine, colon, uterus, esophagus, spleen, kidney, pancreas, prostate and breast. Isoform 1 is detected in uterus, colon and prostate, and in the smooth muscle cell layer in bronchial and arterial walls (at protein level). Isoform 1 is predominantly expressed in smooth muscle. Isoform 4 is predominantly expressed in epithelial cells. In bronchial biopsies, it is expressed in smooth muscle cells of asthma patients, but not in control patients; whereas in epithelial cells, its expression is consistently stronger in asthma patients.

The protein resides in the cell membrane. The protein localises to the cytoplasm. Its function is as follows. G-protein coupled receptor for neuropeptide S (NPS). Promotes mobilization of intracellular Ca(2+) stores. Inhibits cell growth in response to NPS binding. Involved in pathogenesis of asthma and other IgE-mediated diseases. The polypeptide is Neuropeptide S receptor (NPSR1) (Homo sapiens (Human)).